The primary structure comprises 506 residues: Alpha-L-arabinofuranosidase B (506 aa).

Positions 1–26 are cleaved as a signal peptide; it reads MSSGLSLERACAVALGIVASASLVAA. Residues 27-343 form a catalytic region; the sequence is GPCDIYSSGG…ADIVAAKYAI (317 aa). Cystine bridges form between C29-C39, C89-C94, and C184-C185. N-linked (GlcNAc...) asparagine glycosylation occurs at N91. D227 contributes to the substrate binding site. Catalysis depends on E229, which acts as the Nucleophile. 2 residues coordinate substrate: N230 and G304. The active-site Proton donor is the D305. An ABD region spans residues 344 to 506; sequence ASLTSGPALT…VSWVVSTGFA (163 aa). Residues C409 and C447 are joined by a disulfide bond. Positions 424, 426, 427, 443, 471, 473, 476, and 496 each coordinate substrate.

It belongs to the glycosyl hydrolase 54 family.

The protein resides in the secreted. It catalyses the reaction Hydrolysis of terminal non-reducing alpha-L-arabinofuranoside residues in alpha-L-arabinosides.. It functions in the pathway glycan metabolism; L-arabinan degradation. Its function is as follows. Alpha-L-arabinofuranosidase involved in the degradation of arabinoxylan, a major component of plant hemicellulose. Able to hydrolyze 1,5-, 1,3- and 1,2-alpha-linkages not only in L-arabinofuranosyl oligosaccharides, but also in polysaccharides containing terminal non-reducing L-arabinofuranoses in side chains, like L-arabinan, arabinogalactan and arabinoxylan. In Aspergillus oryzae (strain ATCC 42149 / RIB 40) (Yellow koji mold), this protein is Alpha-L-arabinofuranosidase B (abfB).